Reading from the N-terminus, the 156-residue chain is 6,7-dimethyl-8-ribityllumazine synthase (156 aa).

5-amino-6-(D-ribitylamino)uracil-binding positions include Phe-24, 58-60 (AFE), and 82-84 (VII). 87 to 88 (ST) contacts (2S)-2-hydroxy-3-oxobutyl phosphate. Residue His-90 is the Proton donor of the active site. Phe-115 contributes to the 5-amino-6-(D-ribitylamino)uracil binding site. Position 129 (Arg-129) interacts with (2S)-2-hydroxy-3-oxobutyl phosphate.

This sequence belongs to the DMRL synthase family.

The enzyme catalyses (2S)-2-hydroxy-3-oxobutyl phosphate + 5-amino-6-(D-ribitylamino)uracil = 6,7-dimethyl-8-(1-D-ribityl)lumazine + phosphate + 2 H2O + H(+). Its pathway is cofactor biosynthesis; riboflavin biosynthesis; riboflavin from 2-hydroxy-3-oxobutyl phosphate and 5-amino-6-(D-ribitylamino)uracil: step 1/2. In terms of biological role, catalyzes the formation of 6,7-dimethyl-8-ribityllumazine by condensation of 5-amino-6-(D-ribitylamino)uracil with 3,4-dihydroxy-2-butanone 4-phosphate. This is the penultimate step in the biosynthesis of riboflavin. In Chlorobaculum parvum (strain DSM 263 / NCIMB 8327) (Chlorobium vibrioforme subsp. thiosulfatophilum), this protein is 6,7-dimethyl-8-ribityllumazine synthase.